A 631-amino-acid chain; its full sequence is Peptidyl-prolyl cis-trans isomerase CYP71 (631 aa).

The interval 26–45 (VEEEEPMVGPGPAPRGKRKR) is disordered. WD repeat units lie at residues 68–106 (MHRDVVTHVAVSAAEFFISGSMDGHLKFWKKKGVGIEFA), 111–150 (SHLGPIEGLAVSIDGLLCCTISNDHAVKIYDVVNYDMMAM), 201–240 (IHMNPIKVMKYNPVSDTMISGDTKGIIEYWSATTLQFPED), and 257–297 (KCKT…RRVY). One can recognise a PPIase cyclophilin-type domain in the interval 474–628 (LPENVIMHTT…QDVKILNVTV (155 aa)).

This sequence belongs to the cyclophilin-type PPIase family. As to quaternary structure, interacts with FAS1 and LHP1. Interacts (via WD repeat domain) with histone H3. Ubiquitous. Expressed in the meristems.

It is found in the nucleus. The enzyme catalyses [protein]-peptidylproline (omega=180) = [protein]-peptidylproline (omega=0). In terms of biological role, PPIases accelerate the folding of proteins. It catalyzes the cis-trans isomerization of proline imidic peptide bonds in oligopeptides. Histone proline isomerase that increases the rate of cis-trans isomerization of the synthetic histone H3 peptides H3P30 (RKSAP30F-p-nitroanilide) and H3P30K27me3 (RKme3-SAP30F-p-nitroanilide) in the histone H3 N-terminal tail, in vitro. Histone remodeling factor involved in chromatin-based gene silencing. Reinforces H3K27 methylation. Involved in fundamental processes of chromatin assembly and histone modification by mediating the targeting of FAS1 and LHP1 on the chromatin. Required for the formation and development of leaves, for normal phyllotaxy and for the formation, maintenance and activity of root and shoot apical meristems. The chain is Peptidyl-prolyl cis-trans isomerase CYP71 from Arabidopsis thaliana (Mouse-ear cress).